Here is a 678-residue protein sequence, read N- to C-terminus: THO complex subunit 5 homolog A (678 aa).

Disordered regions lie at residues 1 to 35 and 294 to 329; these read MASDSLKKRKPKVNRNEDVKRGRHEDQEGRYYSEE and ALFKPPEDSQDDESDSDAEEEQTTKRRRPTLGVQLD. A Nuclear localization signal motif is present at residues 7 to 10; the sequence is KKRK. Over residues 14–35 the composition is skewed to basic and acidic residues; that stretch reads NRNEDVKRGRHEDQEGRYYSEE. Residues 301–314 show a composition bias toward acidic residues; the sequence is DSQDDESDSDAEEE.

Belongs to the THOC5 family. As to quaternary structure, component of the THO subcomplex, which is composed of thoc1, thoc2, thoc3, thoc5, thoc6 and thoc7. Component of the transcription/export (TREX) complex at least composed of alyref/thoc4, ddx39b, sarnp/cip29, chtop and the THO subcomplex. Interacts with thoc7.

Its subcellular location is the nucleus. It localises to the nucleus speckle. The protein localises to the cytoplasm. Component of the THO subcomplex of the TREX complex which is thought to couple mRNA transcription, processing and nuclear export, and which specifically associates with spliced mRNA and not with unspliced pre-mRNA. Plays a key structural role in the oligomerization of the THO-ddx39b complex. TREX is recruited to spliced mRNAs by a transcription-independent mechanism, binds to mRNA upstream of the exon-junction complex (EJC) and is recruited in a splicing- and cap-dependent manner to a region near the 5' end of the mRNA where it functions in mRNA export to the cytoplasm via the TAP/NXF1 pathway. May be involved in cell differentiation. In Xenopus laevis (African clawed frog), this protein is THO complex subunit 5 homolog A (thoc5-a).